Here is a 312-residue protein sequence, read N- to C-terminus: tRNA dimethylallyltransferase (312 aa).

An ATP-binding site is contributed by 15 to 22 (GPTAAGKS). 17–22 (TAAGKS) contacts substrate. The tract at residues 40 to 43 (DSMQ) is interaction with substrate tRNA.

It belongs to the IPP transferase family. In terms of assembly, monomer. Requires Mg(2+) as cofactor.

It carries out the reaction adenosine(37) in tRNA + dimethylallyl diphosphate = N(6)-dimethylallyladenosine(37) in tRNA + diphosphate. Its function is as follows. Catalyzes the transfer of a dimethylallyl group onto the adenine at position 37 in tRNAs that read codons beginning with uridine, leading to the formation of N6-(dimethylallyl)adenosine (i(6)A). The chain is tRNA dimethylallyltransferase from Streptomyces coelicolor (strain ATCC BAA-471 / A3(2) / M145).